The following is a 229-amino-acid chain: uncharacterized protein (229 aa).

It to M.pneumoniae MPN_376 central region.

This is an uncharacterized protein from Mycoplasma pneumoniae (strain ATCC 29342 / M129 / Subtype 1) (Mycoplasmoides pneumoniae).